A 407-amino-acid chain; its full sequence is Tryptophan synthase beta chain (407 aa).

Lys91 bears the N6-(pyridoxal phosphate)lysine mark.

This sequence belongs to the TrpB family. Tetramer of two alpha and two beta chains. Pyridoxal 5'-phosphate serves as cofactor.

It carries out the reaction (1S,2R)-1-C-(indol-3-yl)glycerol 3-phosphate + L-serine = D-glyceraldehyde 3-phosphate + L-tryptophan + H2O. It participates in amino-acid biosynthesis; L-tryptophan biosynthesis; L-tryptophan from chorismate: step 5/5. Its function is as follows. The beta subunit is responsible for the synthesis of L-tryptophan from indole and L-serine. The protein is Tryptophan synthase beta chain of Streptococcus pneumoniae (strain Hungary19A-6).